An 893-amino-acid chain; its full sequence is AP-4 complex accessory subunit RUSC1 (893 aa).

Disordered stretches follow at residues Glu-31–Glu-223, Glu-237–Ser-332, Ser-339–Arg-358, and Leu-366–Ala-444. Polar residues predominate over residues His-77–Pro-87. Composition is skewed to low complexity over residues Ser-95–Pro-117 and Pro-149–Ser-165. Over residues Ser-177–Asp-187 the composition is skewed to polar residues. A compositionally biased stretch (basic and acidic residues) spans Glu-237 to Glu-257. 2 stretches are compositionally biased toward pro residues: residues Gln-373–Pro-382 and Pro-390–Pro-399. The interaction with TRAF6 stretch occupies residues Met-463–Asn-598. One can recognise an RUN domain in the interval Asp-515–Glu-659. An interaction with IKBKG region spans residues Thr-599 to Pro-665. Disordered stretches follow at residues Arg-700–Ser-721 and His-751–Arg-772. Composition is skewed to low complexity over residues Thr-702–Ser-714 and Thr-754–Pro-770. The 59-residue stretch at Gln-835–Leu-893 folds into the SH3 domain.

In terms of assembly, associated component of the adapter-like complex 4 (AP-4). Interacts with IKBKG and TRAF6. Interacts with F-actin, acetylated actin, TUBB3, STX1A, KIF5B and KLC1. Post-translationally, phosphorylated on serine residues following nuclear translocation. Polyubiquitinated; polyubiquitination involves TRAF6. Expressed in brain, brain stem and spinal cord (at protein level).

It localises to the cytoplasm. The protein localises to the nucleus. The protein resides in the cytoskeleton. It is found in the cytoplasmic vesicle. Its subcellular location is the early endosome. It localises to the postsynaptic density. The protein localises to the golgi apparatus. Its function is as follows. Associates with the adapter-like complex 4 (AP-4) and may therefore play a role in vesicular trafficking of proteins at the trans-Golgi network. Signaling adapter which plays a role in neuronal differentiation. Involved in regulation of NGF-dependent neurite outgrowth. May play a role in neuronal vesicular trafficking, specifically involving pre-synaptic membrane proteins. Seems to be involved in signaling pathways that are regulated by the prolonged activation of MAPK. Can regulate the polyubiquitination of IKBKG and thus may be involved in regulation of the NF-kappa-B pathway. This is AP-4 complex accessory subunit RUSC1 from Mus musculus (Mouse).